We begin with the raw amino-acid sequence, 394 residues long: Elongation factor Tu 1 (394 aa).

The region spanning 10 to 204 (KPHVNVGTIG…YLDSYIPEPE (195 aa)) is the tr-type G domain. A G1 region spans residues 19-26 (GHVDHGKT). GTP is bound at residue 19 to 26 (GHVDHGKT). Position 26 (T26) interacts with Mg(2+). The segment at 60-64 (GITIN) is G2. A G3 region spans residues 81–84 (DCPG). GTP is bound by residues 81–85 (DCPGH) and 136–139 (NKCD). A G4 region spans residues 136 to 139 (NKCD). The tract at residues 174-176 (SAL) is G5.

It belongs to the TRAFAC class translation factor GTPase superfamily. Classic translation factor GTPase family. EF-Tu/EF-1A subfamily. In terms of assembly, monomer.

It is found in the cytoplasm. It catalyses the reaction GTP + H2O = GDP + phosphate + H(+). GTP hydrolase that promotes the GTP-dependent binding of aminoacyl-tRNA to the A-site of ribosomes during protein biosynthesis. This chain is Elongation factor Tu 1, found in Yersinia enterocolitica serotype O:8 / biotype 1B (strain NCTC 13174 / 8081).